A 971-amino-acid polypeptide reads, in one-letter code: Zinc finger CCCH domain-containing protein 7A (971 aa).

TPR repeat units follow at residues Val43–Ala76, Glu89–Asn122, and Lys124–Asp156. Thr210 carries the phosphothreonine modification. C3H1-type zinc fingers lie at residues Leu634–Val656 and Pro769–Glu797. Residues Phe857–His881 form a C2H2-type zinc finger. The C3H1-type 3 zinc-finger motif lies at Ile906–Ala928. Residues Ala924–Leu952 are a coiled coil.

It localises to the nucleus. In terms of biological role, may be a specific regulator of miRNA biogenesis. Binds to microRNAs MIR7-1, MIR16-2 and MIR29A hairpins recognizing the 3'-ATA(A/T)-5' motif in the apical loop. The chain is Zinc finger CCCH domain-containing protein 7A (ZC3H7A) from Homo sapiens (Human).